The sequence spans 430 residues: Adenylosuccinate synthetase (430 aa).

Residues 12–18 and 40–42 contribute to the GTP site; these read GDEGKGK and GHT. Aspartate 13 (proton acceptor) is an active-site residue. Residues aspartate 13 and glycine 40 each contribute to the Mg(2+) site. IMP contacts are provided by residues 13 to 16, 38 to 41, threonine 130, arginine 144, glutamine 224, threonine 239, and arginine 303; these read DEGK and NAGH. The active-site Proton donor is histidine 41. Substrate is bound at residue 299–305; the sequence is TVTGRKR. GTP is bound by residues arginine 305, 331–333, and 413–415; these read KLD and STS.

Belongs to the adenylosuccinate synthetase family. Homodimer. Requires Mg(2+) as cofactor.

The protein resides in the cytoplasm. It catalyses the reaction IMP + L-aspartate + GTP = N(6)-(1,2-dicarboxyethyl)-AMP + GDP + phosphate + 2 H(+). It functions in the pathway purine metabolism; AMP biosynthesis via de novo pathway; AMP from IMP: step 1/2. Functionally, plays an important role in the de novo pathway of purine nucleotide biosynthesis. Catalyzes the first committed step in the biosynthesis of AMP from IMP. In Methylorubrum extorquens (strain CM4 / NCIMB 13688) (Methylobacterium extorquens), this protein is Adenylosuccinate synthetase.